Consider the following 192-residue polypeptide: Ribosome maturation factor RimP (192 aa).

The protein belongs to the RimP family.

The protein resides in the cytoplasm. Required for maturation of 30S ribosomal subunits. The protein is Ribosome maturation factor RimP of Delftia acidovorans (strain DSM 14801 / SPH-1).